Here is a 470-residue protein sequence, read N- to C-terminus: Chromosomal replication initiator protein DnaA (470 aa).

The segment at 1–79 (MTDDTWGLLR…AVQRLAFKVA (79 aa)) is domain I, interacts with DnaA modulators. The tract at residues 79 to 128 (AANSPTRPVQPTMSEAIEEPAPLQTTVVDQLGNQEGNTSVKSPPEDLQAA) is domain II. The tract at residues 129–350 (PLDPRFTFDS…GALTRLFAFA (222 aa)) is domain III, AAA+ region. The ATP site is built by G173, G175, K176, and T177. The tract at residues 351-470 (SLVGREIDMD…VEMLRRSLEA (120 aa)) is domain IV, binds dsDNA.

Belongs to the DnaA family. Oligomerizes as a right-handed, spiral filament on DNA at oriC.

The protein localises to the cytoplasm. Its function is as follows. Plays an essential role in the initiation and regulation of chromosomal replication. ATP-DnaA binds to the origin of replication (oriC) to initiate formation of the DNA replication initiation complex once per cell cycle. Binds the DnaA box (a 9 base pair repeat at the origin) and separates the double-stranded (ds)DNA. Forms a right-handed helical filament on oriC DNA; dsDNA binds to the exterior of the filament while single-stranded (ss)DNA is stabiized in the filament's interior. The ATP-DnaA-oriC complex binds and stabilizes one strand of the AT-rich DNA unwinding element (DUE), permitting loading of DNA polymerase. After initiation quickly degrades to an ADP-DnaA complex that is not apt for DNA replication. Binds acidic phospholipids. The chain is Chromosomal replication initiator protein DnaA from Ruegeria sp. (strain TM1040) (Silicibacter sp.).